Reading from the N-terminus, the 287-residue chain is Merozoite surface protein 2 (287 aa).

A signal peptide spans 1–20 (MKVIKTLSIINFFIFVTFNI). N-linked (GlcNAc...) asparagine glycans are attached at residues N22 and N36. The interval 42 to 248 (SMTESNPPTG…DSQKECTDGN (207 aa)) is disordered. Residues 44 to 213 (TESNPPTGAS…EQTESPELQS (170 aa)) are polymorphic region. Over residues 54–112 (GSAGGSAGGSAGGSAGGSAGGSAGGSAGGSAGGSAGGSAGGSAGGSAGGSAGSGDGNGA) the composition is skewed to gly residues. Tandem repeats lie at residues 55–58 (SAGG), 59–62 (SAGG), 63–66 (SAGG), 67–70 (SAGG), 71–74 (SAGG), 75–78 (SAGG), 79–82 (SAGG), 83–86 (SAGG), 87–90 (SAGG), 91–94 (SAGG), 95–98 (SAGG), and 99–102 (SAGG). A 12 X 4 AA tandem repeats of S-A-G-G region spans residues 55–102 (SAGGSAGGSAGGSAGGSAGGSAGGSAGGSAGGSAGGSAGGSAGGSAGG). The span at 121-149 (SPSTPATTTTTTTTNDAEASTSTSSENPN) shows a compositional bias: low complexity. Polar residues-rich tracts occupy residues 150–180 (HNNAETNQANKETQNNSNVQQDSQTKSNVPP) and 187–215 (KSPTAQPEQAENSAPTAEQTESPELQSAP). N-linked (GlcNAc...) asparagine glycosylation occurs at N164. The N-linked (GlcNAc...) asparagine glycan is linked to N236. Cysteines 244 and 252 form a disulfide. Residues N260 and N261 are each glycosylated (N-linked (GlcNAc...) asparagine). N261 carries the GPI-anchor amidated asparagine lipid modification. Residues 262-287 (SSNIASINKFVVLISATLVLSFAIFI) constitute a propeptide, removed in mature form.

The protein resides in the cell membrane. In terms of biological role, may play a role in the merozoite attachment to the erythrocyte. This Plasmodium falciparum (isolate FCR-3 / Gambia) protein is Merozoite surface protein 2.